The chain runs to 182 residues: Glycoprotein Q2 (182 aa).

An N-terminal signal peptide occupies residues 1–20; it reads MHFVAVYILTHFHAYPGVAA. Residues Asn-74 and Asn-110 are each glycosylated (N-linked (GlcNAc...) asparagine; by host).

In terms of assembly, interacts with isoform gQ2. The heterodimer gQ1-gQ2 associates with the glycoprotein complex gH-gL to form a tetrameric complex. The gH/gL/gQ1/gQ2 complex binds to host TNFRSF4. Post-translationally, glycosylated by host.

It localises to the virion membrane. Its subcellular location is the host endoplasmic reticulum-Golgi intermediate compartment. Plays a role in virus entry by participating in host receptor binding at the cell surface. The polypeptide is Glycoprotein Q2 (Human herpesvirus 6B (strain Z29) (HHV-6 variant B)).